The following is a 324-amino-acid chain: MGCPVSRGGSPGCGRRIAEELRLAEDARLRLALLGRCIVKGSPAQVRKELRAELKAIDAEWRPVIARESLRKELDAIDAEWQHAITFWHISRAIIGSIELSKELDAIDAEWRPVIVRESLRKELKAIDAEWRPAIRLESAYRAIIGSIELSKELKAIDAETQHAVELRRALRTIEGRIELSRELKAIDAEWAPRIAQAKEIAQARESLRKELNDIDAEWAPKIAQAKEIAQAKAELAAATDALKRAADKLQALGKMGTTSTPGTDLIGVVTTAVTTTLAGTQPAPGTDLVGVATPSTALGQPAPSTALTSVAAEVATPSTALGV.

The signal sequence occupies residues 1–32 (MGCPVSRGGSPGCGRRIAEELRLAEDARLRLA). The stretch at 195-255 (IAQAKEIAQA…AADKLQALGK (61 aa)) forms a coiled coil.

The protein resides in the secreted. Associates with actin filament appendages that are formed in the inclusion appendages of the parasitophorous vacuole during infection of the host erythrocyte. The sequence is that of Appendage-associated protein (aaaP1) from Anaplasma marginale (strain Florida).